The primary structure comprises 39 residues: Photosystem II reaction center protein L (39 aa).

Residues 18 to 38 (SLYLGLLLVFVMGILFSSYFF) traverse the membrane as a helical segment.

The protein belongs to the PsbL family. PSII is composed of 1 copy each of membrane proteins PsbA, PsbB, PsbC, PsbD, PsbE, PsbF, PsbH, PsbI, PsbJ, PsbK, PsbL, PsbM, PsbT, PsbX, PsbY, Psb30/Ycf12, peripheral proteins PsbO, CyanoQ (PsbQ), PsbU, PsbV and a large number of cofactors. It forms dimeric complexes.

Its subcellular location is the cellular thylakoid membrane. Its function is as follows. One of the components of the core complex of photosystem II (PSII). PSII is a light-driven water:plastoquinone oxidoreductase that uses light energy to abstract electrons from H(2)O, generating O(2) and a proton gradient subsequently used for ATP formation. It consists of a core antenna complex that captures photons, and an electron transfer chain that converts photonic excitation into a charge separation. This subunit is found at the monomer-monomer interface and is required for correct PSII assembly and/or dimerization. The protein is Photosystem II reaction center protein L of Prochlorococcus marinus (strain NATL2A).